Consider the following 370-residue polypeptide: Allatostatins (370 aa).

Positions 1 to 27 (MSGPRTCFCLPSALVLVLLSLSTSALG) are cleaved as a signal peptide. The propeptide occupies 28-65 (TAPEPSGVHEESPAGGGTDLLPHPEDLSASDNPDLEFV). The disordered stretch occupies residues 29 to 58 (APEPSGVHEESPAGGGTDLLPHPEDLSASD). 4 positions are modified to leucine amide: Leu73, Leu94, Leu105, and Leu117. The propeptide occupies 121–151 (DYDYYGEEDEDDQQAIGDEDIEESDVGDLMD). Leucine amide occurs at positions 161, 172, 188, 200, 213, and 232. Residues 236–251 (SDDIDFRELEEKFAED) constitute a propeptide that is removed on maturation. Leu264 carries the leucine amide modification. Positions 268–345 (EVEPSELEAV…ITPEEFSRMV (78 aa)) are excised as a propeptide. Residues 273-298 (ELEAVRNEEKDNSSVHDKKNNTNDMH) are disordered. Position 353 is a leucine amide (Leu353). Ile364 bears the Isoleucine amide mark. Residues 368–370 (SER) constitute a propeptide that is removed on maturation.

This sequence belongs to the allatostatin family. As to expression, brain, subesophageal ganglion and corpus allatum.

The protein localises to the secreted. Its function is as follows. Neuropeptide inhibitors of juvenile hormone synthesis and gut muscle contraction. This is Allatostatins from Diploptera punctata (Pacific beetle cockroach).